A 217-amino-acid chain; its full sequence is MYLFHLCLVFACVPCPTVQASKLCLGWLWDMDIDPYKEFGSSYQLLNFLPLDFFPDLNALVDTAAALYEEELTGREHCSPHHTAIRQALVCWEELTRLITWMSENTTEEVRRIIVDHVNNTWGLKVRQTLWFHLSCLTFGQHTVQEFLVSFGVWIRTPAPYRPPNAPILSTLPEHTVIRRRGGSRAARSPRRRTPSPRRRRSQSPRRRRSQSPASNC.

Positions 1–20 (MYLFHLCLVFACVPCPTVQA) are cleaved as a signal peptide. Residues 26 to 28 (GWL) form an HBEAG region. The interval 166-217 (APILSTLPEHTVIRRRGGSRAARSPRRRTPSPRRRRSQSPRRRRSQSPASNC) is disordered. Basic residues predominate over residues 178 to 210 (IRRRGGSRAARSPRRRTPSPRRRRSQSPRRRRS). One copy of the 1; half-length repeat lies at 189-195 (SPRRRTP). Residues 189 to 211 (SPRRRTPSPRRRRSQSPRRRRSQ) are 3 X 8 AA repeats of S-P-R-R-R-R-S-Q. Positions 189 to 217 (SPRRRTPSPRRRRSQSPRRRRSQSPASNC) are excised as a propeptide. 2 tandem repeats follow at residues 196-203 (SPRRRRSQ) and 204-211 (SPRRRRSQ).

This sequence belongs to the orthohepadnavirus precore antigen family. In terms of assembly, homodimerizes. Post-translationally, phosphorylated. In terms of processing, cleaved by host furin.

It is found in the secreted. It localises to the host nucleus. Functionally, may regulate immune response to the intracellular capsid in acting as a T-cell tolerogen, by having an immunoregulatory effect which prevents destruction of infected cells by cytotoxic T-cells. This immune regulation may predispose to chronicity during perinatal infections and prevent severe liver injury during adult infections. This chain is External core antigen, found in Otospermophilus beecheyi (California ground squirrel).